A 228-amino-acid chain; its full sequence is Lipoprotein-releasing system ATP-binding protein LolD (228 aa).

An ABC transporter domain is found at 6 to 228 (LRLSGIEKTY…LSDGRLSAES (223 aa)). 43 to 50 (APSGAGKS) is an ATP binding site.

Belongs to the ABC transporter superfamily. Lipoprotein translocase (TC 3.A.1.125) family. The complex is composed of two ATP-binding proteins (LolD) and two transmembrane proteins (LolC and LolE).

It localises to the cell inner membrane. In terms of biological role, part of the ABC transporter complex LolCDE involved in the translocation of mature outer membrane-directed lipoproteins, from the inner membrane to the periplasmic chaperone, LolA. Responsible for the formation of the LolA-lipoprotein complex in an ATP-dependent manner. This chain is Lipoprotein-releasing system ATP-binding protein LolD, found in Ruegeria pomeroyi (strain ATCC 700808 / DSM 15171 / DSS-3) (Silicibacter pomeroyi).